The primary structure comprises 109 residues: uncharacterized protein (109 aa).

This is an uncharacterized protein from Escherichia coli (strain K12).